Consider the following 144-residue polypeptide: UPF0102 protein BPSL3274 (144 aa).

The interval 1 to 28 (MCHAREASPGTGEPEAAPRDNFPREAGS) is disordered. Positions 16-28 (AAPRDNFPREAGS) are enriched in basic and acidic residues.

It belongs to the UPF0102 family.

This Burkholderia pseudomallei (strain K96243) protein is UPF0102 protein BPSL3274.